The primary structure comprises 113 residues: UPF0482 protein YnfB (113 aa).

Residues 1-28 (MNNTLSKRLCLTAMLTLAAVVYTTSAFA) form the signal peptide.

The protein belongs to the UPF0482 family.

This Salmonella agona (strain SL483) protein is UPF0482 protein YnfB.